The chain runs to 264 residues: MAVGKNKRLTKGGKKGAKKKVVDPFSKKDWYDVKAPAMFNIRNIGKTLVTRTQGTKIASDGLKGRVFEVSLADLQNDEVAFRKFKLITEDVQGKNCLTNFHGMDLTRDKMCSMVKKWQTMIEAHVDVKTTDGYLLRLFCVGFTKKRNNQIRKTSYAQHQQVRQIRKKMMEIMTREVQTNDLKEVVNKLIPDSIGKDIEKACQSIYPLHDVFVRKVKMLKKPKFELGKLMELHGEGGSSGKAAGDETGAKVERADGYEPPVQESV.

An N6-acetyllysine; alternate modification is found at K34. A Glycyl lysine isopeptide (Lys-Gly) (interchain with G-Cter in SUMO2); alternate cross-link involves residue K34. The residue at position 56 (K56) is an N6-acetyllysine. Position 155 is an ADP-ribosyltyrosine (Y155). The tract at residues 233 to 264 is disordered; sequence GEGGSSGKAAGDETGAKVERADGYEPPVQESV. S237 carries the phosphoserine modification. The span at 242 to 255 shows a compositional bias: basic and acidic residues; the sequence is AGDETGAKVERADG. K249 is subject to N6-acetyllysine; alternate. K249 is covalently cross-linked (Glycyl lysine isopeptide (Lys-Gly) (interchain with G-Cter in SUMO2); alternate). Y256 is subject to Phosphotyrosine. A Phosphoserine modification is found at S263.

It belongs to the eukaryotic ribosomal protein eS1 family. Component of the small ribosomal subunit. Mature ribosomes consist of a small (40S) and a large (60S) subunit. The 40S subunit contains about 33 different proteins and 1 molecule of RNA (18S). The 60S subunit contains about 49 different proteins and 3 molecules of RNA (28S, 5.8S and 5S). Identified in a IGF2BP1-dependent mRNP granule complex containing untranslated mRNAs. Binds with high affinity to IPO4. Interacts with DDIT3. Part of the small subunit (SSU) processome, composed of more than 70 proteins and the RNA chaperone small nucleolar RNA (snoRNA) U3. In terms of processing, ADP-ribosylated at Tyr-155 by PARP1 in presence of HPF1.

It localises to the cytoplasm. It is found in the nucleus. The protein resides in the nucleolus. Its function is as follows. Component of the small ribosomal subunit. The ribosome is a large ribonucleoprotein complex responsible for the synthesis of proteins in the cell. Part of the small subunit (SSU) processome, first precursor of the small eukaryotic ribosomal subunit. During the assembly of the SSU processome in the nucleolus, many ribosome biogenesis factors, an RNA chaperone and ribosomal proteins associate with the nascent pre-rRNA and work in concert to generate RNA folding, modifications, rearrangements and cleavage as well as targeted degradation of pre-ribosomal RNA by the RNA exosome. May play a role during erythropoiesis through regulation of transcription factor DDIT3. This is Small ribosomal subunit protein eS1 (Rps3a) from Mus musculus (Mouse).